The sequence spans 21 residues: Basic phospholipase A2 BjIV (21 aa).

The protein belongs to the phospholipase A2 family. Group II subfamily. In terms of assembly, can form dimers, trimers and tetramers. The cofactor is Ca(2+). Contains seven disulfide bonds. As to expression, expressed by the venom gland.

The protein resides in the secreted. The enzyme catalyses a 1,2-diacyl-sn-glycero-3-phosphocholine + H2O = a 1-acyl-sn-glycero-3-phosphocholine + a fatty acid + H(+). With respect to regulation, inhibited by crotapotin. Snake venom phospholipase A2 has a high enzymatic activity and produces moderate myonecrosis in skeletal muscle, but shows no neuromuscular activity in mouse phrenic nerve-diaphragm preparations. PLA2 catalyzes the calcium-dependent hydrolysis of the 2-acyl groups in 3-sn-phosphoglycerides. The polypeptide is Basic phospholipase A2 BjIV (Bothrops jararacussu (Jararacussu)).